A 104-amino-acid chain; its full sequence is Small ribosomal subunit protein bS6c (104 aa).

It belongs to the bacterial ribosomal protein bS6 family.

Its subcellular location is the plastid. The protein resides in the cyanelle. Binds together with bS18 to 16S ribosomal RNA. This is Small ribosomal subunit protein bS6c (rps6) from Cyanophora paradoxa.